Consider the following 366-residue polypeptide: Chorismate synthase (366 aa).

Residues Arg-48 and Arg-54 each contribute to the NADP(+) site. FMN is bound by residues 125–127, 238–239, Gly-278, 293–297, and Arg-319; these read RSS, NA, and KPTSS.

It belongs to the chorismate synthase family. Homotetramer. It depends on FMNH2 as a cofactor.

It carries out the reaction 5-O-(1-carboxyvinyl)-3-phosphoshikimate = chorismate + phosphate. Its pathway is metabolic intermediate biosynthesis; chorismate biosynthesis; chorismate from D-erythrose 4-phosphate and phosphoenolpyruvate: step 7/7. Catalyzes the anti-1,4-elimination of the C-3 phosphate and the C-6 proR hydrogen from 5-enolpyruvylshikimate-3-phosphate (EPSP) to yield chorismate, which is the branch point compound that serves as the starting substrate for the three terminal pathways of aromatic amino acid biosynthesis. This reaction introduces a second double bond into the aromatic ring system. In Neisseria meningitidis serogroup A / serotype 4A (strain DSM 15465 / Z2491), this protein is Chorismate synthase.